The primary structure comprises 120 residues: Galanin-like peptide (120 aa).

An N-terminal signal peptide occupies residues 1-22; it reads MALTVPLIVLAVLLSLMESPAS. Positions 85–120 are excised as a propeptide; the sequence is SLGETFAKPDSGVTFVGVPDVVPWKRIRPGTTRFQI.

This sequence belongs to the galanin family.

It localises to the secreted. In terms of biological role, hypothalamic neuropeptide which binds to the G-protein-coupled galanin receptors (GALR1, GALR2 and GALR3). Involved in a large number of putative physiological functions in CNS homeostatic processes, including the regulation of gonadotropin-releasing hormone secretion. In Sus scrofa (Pig), this protein is Galanin-like peptide (GALP).